We begin with the raw amino-acid sequence, 365 residues long: Probable 7-methylxanthine methyltransferase 3 (365 aa).

Tyrosine 18 contacts S-adenosyl-L-homocysteine. Threonine 25 serves as a coordination point for theobromine. S-adenosyl-L-homocysteine is bound by residues cysteine 62, glutamine 67, aspartate 99, leucine 100, serine 132, and phenylalanine 133. 3 residues coordinate theobromine: tyrosine 150, histidine 153, and tryptophan 154. Asparagine 170, phenylalanine 258, and asparagine 259 together coordinate Mg(2+). Residue phenylalanine 311 coordinates theobromine.

This sequence belongs to the methyltransferase superfamily. Type-7 methyltransferase family. Mg(2+) is required as a cofactor.

It catalyses the reaction 7-methylxanthine + S-adenosyl-L-methionine = theobromine + S-adenosyl-L-homocysteine + H(+). It participates in alkaloid biosynthesis. Functionally, involved in the biosynthesis of theobromine. This Theobroma cacao (Cacao) protein is Probable 7-methylxanthine methyltransferase 3.